Here is a 647-residue protein sequence, read N- to C-terminus: MGKIIGIDLGTTNSCVAILEGNTPKVIENSEGARTTPSIIAYMEDGEILVGAPAKRQAVTNPRNTLYAVKRLIGRKFEEKEVQKDIGLMPYSIVKADNGDAWVSVRDQKLAPPQVSAEVLRKMKKTAEDYLGEPVTEAVITVPAYFNDSQRQATKDAGRIAGLDVKRIINEPTAAALAFGLDKNEKGDRKIAVYDLGGGTFDISIIEIADVDGEKQFEVLSTNGDTFLGGEDFDQRIIDYIIGEFKKDQGVDLSKDVLALQRLKEAAEKAKIELSSSQQTEINLPYITADASGPKHLNLKMTRAKLESLVEELITRTIEPCRTAIKDAGVKVSDIDDVILVGGMTRMPKVQEQVKEFFGKEARKDVNPDEAVAVGAAIQGSVLSGDRKDVLLLDVTPLSLGIETLGGVMTKMITKNTTIPTKHAQVFSTADDNQPAVTIKVYQGEREMATGNKLLGEFNLEGIPPAPRGTPQIEVSFDIDANGILHVGAKDKATGKENRITIKANSGLSEDEIQRMVKDAEANAEEDKKARELADARNQADALIHSTRKAVTEYGDKLEAGEKEKIEAAIKELEDAARGGDKTEIDAKVNALSEASQKLGEKVYADMQAKAGEQGAAGAAGAGAQQQAQPQDDNVVDAEFKEVNDKK.

The residue at position 200 (T200) is a Phosphothreonine; by autocatalysis. The segment covering 611–631 has biased composition (low complexity); it reads AGEQGAAGAAGAGAQQQAQPQ. The disordered stretch occupies residues 611–647; it reads AGEQGAAGAAGAGAQQQAQPQDDNVVDAEFKEVNDKK. A compositionally biased stretch (basic and acidic residues) spans 638 to 647; sequence AEFKEVNDKK.

This sequence belongs to the heat shock protein 70 family.

Its function is as follows. Acts as a chaperone. The polypeptide is Chaperone protein DnaK (Cupriavidus taiwanensis (strain DSM 17343 / BCRC 17206 / CCUG 44338 / CIP 107171 / LMG 19424 / R1) (Ralstonia taiwanensis (strain LMG 19424))).